The following is a 399-amino-acid chain: Large envelope protein (399 aa).

Methionine 1 carries the N-acetylmethionine modification. Glycine 2 carries the N-myristoyl glycine; by host lipid modification. A pre-S1 region spans residues 2–118; the sequence is GLSWTVPLEW…PPLRDTHPQA (117 aa). The tract at residues 2–173 is pre-S; the sequence is GLSWTVPLEW…FSRIGDPAPN (172 aa). Residues 2 to 180 lie on the Virion surface; in external conformation side of the membrane; that stretch reads GLSWTVPLEW…APNMESITSG (179 aa). The Intravirion; in internal conformation portion of the chain corresponds to 2–252; that stretch reads GLSWTVPLEW…PGYRWMCLRR (251 aa). A glycan (N-linked (GlcNAc...) asparagine) is linked at serine 4. The interval 85-110 is disordered; that stretch reads KTLPADPPPASTNRQSGRQPTPITPP. A compositionally biased stretch (polar residues) spans 95-105; that stretch reads STNRQSGRQPT. The interval 119–173 is pre-S2; that stretch reads MQWNSTTFHQALQDPRVRGLYFPAGGSSSGTVNPVPTTASLISSIFSRIGDPAPN. A helical transmembrane segment spans residues 181-201; that stretch reads FLGPLLVLQAGFFLLTKILTI. The Intravirion; in external conformation portion of the chain corresponds to 202-252; that stretch reads PQSLDSWWTSLNFLGGAPVCLGQNSQSPTSNHSPTSCPPICPGYRWMCLRR. Residues 253–273 form a helical membrane-spanning segment; it reads FIIFLFILLLCLIFLLVLLDY. Residues 274–347 are Virion surface-facing; the sequence is QGMLPVCPLI…WASARFSWLS (74 aa). Asparagine 319 is a glycosylation site (N-linked (GlcNAc...) asparagine; by host). The helical transmembrane segment at 348–368 threads the bilayer; sequence LLVPFVQWFAGLSPTVWLSVI. Residues 369–374 are Intravirion-facing; the sequence is WMMWYW. The helical transmembrane segment at 375 to 397 threads the bilayer; sequence GPSLYDILSPFIPLLPIFFCLWV. Residues 398–399 lie on the Virion surface side of the membrane; that stretch reads YI.

This sequence belongs to the orthohepadnavirus major surface antigen family. In terms of assembly, in its internal form (Li-HBsAg), interacts with the capsid protein and with the isoform S. Interacts with host chaperone CANX. As to quaternary structure, associates with host chaperone CANX through its pre-S2 N glycan; this association may be essential for isoform M proper secretion. Interacts with isoform L. Interacts with the antigens of satellite virus HDV (HDVAgs); this interaction is required for encapsidation of HDV genomic RNA. In terms of processing, isoform M is N-terminally acetylated by host at a ratio of 90%, and N-glycosylated by host at the pre-S2 region. Myristoylated.

It localises to the virion membrane. Functionally, the large envelope protein exists in two topological conformations, one which is termed 'external' or Le-HBsAg and the other 'internal' or Li-HBsAg. In its external conformation the protein attaches the virus to cell receptors and thereby initiating infection. This interaction determines the species specificity and liver tropism. This attachment induces virion internalization predominantly through caveolin-mediated endocytosis. The large envelope protein also assures fusion between virion membrane and endosomal membrane. In its internal conformation the protein plays a role in virion morphogenesis and mediates the contact with the nucleocapsid like a matrix protein. Its function is as follows. The middle envelope protein plays an important role in the budding of the virion. It is involved in the induction of budding in a nucleocapsid independent way. In this process the majority of envelope proteins bud to form subviral lipoprotein particles of 22 nm of diameter that do not contain a nucleocapsid. This chain is Large envelope protein, found in Homo sapiens (Human).